A 111-amino-acid polypeptide reads, in one-letter code: Ribonuclease P protein component (111 aa).

Belongs to the RnpA family. Consists of a catalytic RNA component (M1 or rnpB) and a protein subunit.

It carries out the reaction Endonucleolytic cleavage of RNA, removing 5'-extranucleotides from tRNA precursor.. Functionally, RNaseP catalyzes the removal of the 5'-leader sequence from pre-tRNA to produce the mature 5'-terminus. It can also cleave other RNA substrates such as 4.5S RNA. The protein component plays an auxiliary but essential role in vivo by binding to the 5'-leader sequence and broadening the substrate specificity of the ribozyme. The polypeptide is Ribonuclease P protein component (Clostridium botulinum (strain Okra / Type B1)).